Consider the following 335-residue polypeptide: Anthranilate phosphoribosyltransferase (335 aa).

Residues Gly79, 82–83, Ser87, 89–92, 107–115, and Ser119 contribute to the 5-phospho-alpha-D-ribose 1-diphosphate site; these read GD, NIST, and KHGNRSITS. Gly79 contributes to the anthranilate binding site. Ser91 is a binding site for Mg(2+). Position 110 (Asn110) interacts with anthranilate. Arg165 contacts anthranilate. Residues Asp224 and Glu225 each contribute to the Mg(2+) site.

The protein belongs to the anthranilate phosphoribosyltransferase family. Homodimer. Requires Mg(2+) as cofactor.

The catalysed reaction is N-(5-phospho-beta-D-ribosyl)anthranilate + diphosphate = 5-phospho-alpha-D-ribose 1-diphosphate + anthranilate. Its pathway is amino-acid biosynthesis; L-tryptophan biosynthesis; L-tryptophan from chorismate: step 2/5. Catalyzes the transfer of the phosphoribosyl group of 5-phosphorylribose-1-pyrophosphate (PRPP) to anthranilate to yield N-(5'-phosphoribosyl)-anthranilate (PRA). This chain is Anthranilate phosphoribosyltransferase, found in Lactococcus lactis subsp. cremoris (strain MG1363).